The chain runs to 298 residues: Pheromone-regulated membrane protein 9 (298 aa).

Residues 1–111 (MSPQYHFYFV…YWIYEVTRHK (111 aa)) lie on the Cytoplasmic side of the membrane. The helical transmembrane segment at 112–132 (AAVILLVLIVTSILLLVFFYN) threads the bilayer. Residues 133–137 (TEFCV) lie on the Extracellular side of the membrane. The helical transmembrane segment at 138–158 (AFEILLFSFCFPGTCMVVIAF) threads the bilayer. At 159 to 298 (SEPIGDREFK…QEYPGVDEFF (140 aa)) the chain is on the cytoplasmic side. The tract at residues 235 to 262 (SSASNVKDAQSNDETAGTPNEAAESSSF) is disordered. The COPII binding stretch occupies residues 297 to 298 (FF).

The protein belongs to the DUP/COS family. In terms of assembly, interacts with PRM8. Binds to COPII coated vesicles.

It is found in the cell membrane. Functionally, may be involved in endoplasmic reticulum exit trafficking of proteins. The chain is Pheromone-regulated membrane protein 9 (PRM9) from Saccharomyces cerevisiae (strain ATCC 204508 / S288c) (Baker's yeast).